Reading from the N-terminus, the 264-residue chain is S-adenosylmethionine decarboxylase proenzyme (264 aa).

Serine 112 serves as the catalytic Schiff-base intermediate with substrate; via pyruvic acid. Serine 112 carries the post-translational modification Pyruvic acid (Ser); by autocatalysis. The active-site Proton acceptor; for processing activity is the histidine 117. Catalysis depends on cysteine 140, which acts as the Proton donor; for catalytic activity.

Belongs to the prokaryotic AdoMetDC family. Type 2 subfamily. In terms of assembly, heterooctamer of four alpha and four beta chains arranged as a tetramer of alpha/beta heterodimers. The cofactor is pyruvate. Is synthesized initially as an inactive proenzyme. Formation of the active enzyme involves a self-maturation process in which the active site pyruvoyl group is generated from an internal serine residue via an autocatalytic post-translational modification. Two non-identical subunits are generated from the proenzyme in this reaction, and the pyruvate is formed at the N-terminus of the alpha chain, which is derived from the carboxyl end of the proenzyme. The post-translation cleavage follows an unusual pathway, termed non-hydrolytic serinolysis, in which the side chain hydroxyl group of the serine supplies its oxygen atom to form the C-terminus of the beta chain, while the remainder of the serine residue undergoes an oxidative deamination to produce ammonia and the pyruvoyl group blocking the N-terminus of the alpha chain.

It carries out the reaction S-adenosyl-L-methionine + H(+) = S-adenosyl 3-(methylsulfanyl)propylamine + CO2. It participates in amine and polyamine biosynthesis; S-adenosylmethioninamine biosynthesis; S-adenosylmethioninamine from S-adenosyl-L-methionine: step 1/1. Functionally, catalyzes the decarboxylation of S-adenosylmethionine to S-adenosylmethioninamine (dcAdoMet), the propylamine donor required for the synthesis of the polyamines spermine and spermidine from the diamine putrescine. The sequence is that of S-adenosylmethionine decarboxylase proenzyme from Hamiltonella defensa subsp. Acyrthosiphon pisum (strain 5AT).